Consider the following 460-residue polypeptide: Cyclic 2,3-diphosphoglycerate synthetase (460 aa).

Homodimer.

It is found in the cytoplasm. It catalyses the reaction (2R)-2,3-bisphosphoglycerate + ATP + H(+) = cyclic (2R)-2,3-bisphosphoglycerate + ADP + phosphate. Its function is as follows. Catalyzes the formation of cyclic 2,3-diphosphoglycerate (cDPG) by formation of an intramolecular phosphoanhydride bond at the expense of ATP. It is also able to catalyze the hydrolysis of cDPG but with significant slower rates (8-10 times). May be involved in thermoadaptation. The sequence is that of Cyclic 2,3-diphosphoglycerate synthetase (cpgS) from Methanothermus fervidus (strain ATCC 43054 / DSM 2088 / JCM 10308 / V24 S).